Consider the following 466-residue polypeptide: Ribulose bisphosphate carboxylase large chain (466 aa).

Lysine 5 carries the post-translational modification N6,N6,N6-trimethyllysine. Asparagine 114 and threonine 164 together coordinate substrate. The Proton acceptor role is filled by lysine 166. Position 168 (lysine 168) interacts with substrate. Positions 192, 194, and 195 each coordinate Mg(2+). Position 192 is an N6-carboxylysine (lysine 192). Histidine 285 serves as the catalytic Proton acceptor. Substrate is bound by residues arginine 286, histidine 318, and serine 370.

It belongs to the RuBisCO large chain family. Type I subfamily. In terms of assembly, heterohexadecamer of 8 large chains and 8 small chains; disulfide-linked. The disulfide link is formed within the large subunit homodimers. Mg(2+) serves as cofactor. In terms of processing, the disulfide bond which can form in the large chain dimeric partners within the hexadecamer appears to be associated with oxidative stress and protein turnover.

It localises to the plastid. The protein resides in the chloroplast. It catalyses the reaction 2 (2R)-3-phosphoglycerate + 2 H(+) = D-ribulose 1,5-bisphosphate + CO2 + H2O. The catalysed reaction is D-ribulose 1,5-bisphosphate + O2 = 2-phosphoglycolate + (2R)-3-phosphoglycerate + 2 H(+). Functionally, ruBisCO catalyzes two reactions: the carboxylation of D-ribulose 1,5-bisphosphate, the primary event in carbon dioxide fixation, as well as the oxidative fragmentation of the pentose substrate in the photorespiration process. Both reactions occur simultaneously and in competition at the same active site. The protein is Ribulose bisphosphate carboxylase large chain of Moringa oleifera (Horseradish tree).